Reading from the N-terminus, the 556-residue chain is Genetic interactor of prohibitins 3, mitochondrial (556 aa).

The transit peptide at 1–21 (MLNLCHALRGVRQFSCSVIVK) directs the protein to the mitochondrion. The CP-type G domain occupies 113–305 (ESTLNDILNY…LFDLPGYSTS (193 aa)).

It belongs to the TRAFAC class YlqF/YawG GTPase family. GEP3 subfamily.

Its subcellular location is the mitochondrion. Functionally, interacts genetically with prohibitins and thus may be involved in the mitochondrial lipid metabolism. In Saccharomyces cerevisiae (strain AWRI1631) (Baker's yeast), this protein is Genetic interactor of prohibitins 3, mitochondrial (GEP3).